The following is a 460-amino-acid chain: Cysteine--tRNA ligase (460 aa).

Residue cysteine 28 coordinates Zn(2+). A 'HIGH' region motif is present at residues 30-40 (MTVYDYCHLGH). Zn(2+)-binding residues include cysteine 209, histidine 234, and glutamate 238. The short motif at 266–270 (KMSKS) is the 'KMSKS' region element. Lysine 269 lines the ATP pocket.

The protein belongs to the class-I aminoacyl-tRNA synthetase family. Monomer. It depends on Zn(2+) as a cofactor.

The protein resides in the cytoplasm. It carries out the reaction tRNA(Cys) + L-cysteine + ATP = L-cysteinyl-tRNA(Cys) + AMP + diphosphate. This Pseudomonas putida (strain W619) protein is Cysteine--tRNA ligase.